The following is a 652-amino-acid chain: DNA ligase (652 aa).

NAD(+) contacts are provided by residues 29 to 33 (DSDYD), 78 to 79 (SL), and Glu-107. Lys-109 serves as the catalytic N6-AMP-lysine intermediate. NAD(+) is bound by residues Arg-130, Glu-164, Lys-278, and Lys-302. Zn(2+) contacts are provided by Cys-395, Cys-398, Cys-413, and Cys-418. The BRCT domain occupies 577-652 (NSDAALFGLT…IEDEDWLRQL (76 aa)).

Belongs to the NAD-dependent DNA ligase family. LigA subfamily. The cofactor is Mg(2+). Requires Mn(2+) as cofactor.

It catalyses the reaction NAD(+) + (deoxyribonucleotide)n-3'-hydroxyl + 5'-phospho-(deoxyribonucleotide)m = (deoxyribonucleotide)n+m + AMP + beta-nicotinamide D-nucleotide.. DNA ligase that catalyzes the formation of phosphodiester linkages between 5'-phosphoryl and 3'-hydroxyl groups in double-stranded DNA using NAD as a coenzyme and as the energy source for the reaction. It is essential for DNA replication and repair of damaged DNA. In Streptococcus pyogenes serotype M1, this protein is DNA ligase.